We begin with the raw amino-acid sequence, 406 residues long: Phosphopentomutase (406 aa).

Positions 10, 305, 310, 346, 347, and 358 each coordinate Mn(2+).

It belongs to the phosphopentomutase family. The cofactor is Mn(2+).

The protein localises to the cytoplasm. It carries out the reaction 2-deoxy-alpha-D-ribose 1-phosphate = 2-deoxy-D-ribose 5-phosphate. The enzyme catalyses alpha-D-ribose 1-phosphate = D-ribose 5-phosphate. The protein operates within carbohydrate degradation; 2-deoxy-D-ribose 1-phosphate degradation; D-glyceraldehyde 3-phosphate and acetaldehyde from 2-deoxy-alpha-D-ribose 1-phosphate: step 1/2. Its function is as follows. Isomerase that catalyzes the conversion of deoxy-ribose 1-phosphate (dRib-1-P) and ribose 1-phosphate (Rib-1-P) to deoxy-ribose 5-phosphate (dRib-5-P) and ribose 5-phosphate (Rib-5-P), respectively. The polypeptide is Phosphopentomutase (Methylorubrum extorquens (strain PA1) (Methylobacterium extorquens)).